Consider the following 217-residue polypeptide: Holliday junction branch migration complex subunit RuvA (217 aa).

Residues 1 to 64 form a domain I region; the sequence is MIGKLTGILD…EDAIRLFGFE (64 aa). Residues 65-145 are domain II; the sequence is TKVEQDWFCL…NAPHQSMPHF (81 aa). The flexible linker stretch occupies residues 146–160; the sequence is VSYSSETSSQAGTQH. Residues 161 to 217 are domain III; sequence TGHQHSMDALAALTKLGFERDQATHALQEAIKAFEGETPSSALLIRHSLKLLSSHLK.

This sequence belongs to the RuvA family. In terms of assembly, homotetramer. Forms an RuvA(8)-RuvB(12)-Holliday junction (HJ) complex. HJ DNA is sandwiched between 2 RuvA tetramers; dsDNA enters through RuvA and exits via RuvB. An RuvB hexamer assembles on each DNA strand where it exits the tetramer. Each RuvB hexamer is contacted by two RuvA subunits (via domain III) on 2 adjacent RuvB subunits; this complex drives branch migration. In the full resolvosome a probable DNA-RuvA(4)-RuvB(12)-RuvC(2) complex forms which resolves the HJ.

The protein resides in the cytoplasm. Functionally, the RuvA-RuvB-RuvC complex processes Holliday junction (HJ) DNA during genetic recombination and DNA repair, while the RuvA-RuvB complex plays an important role in the rescue of blocked DNA replication forks via replication fork reversal (RFR). RuvA specifically binds to HJ cruciform DNA, conferring on it an open structure. The RuvB hexamer acts as an ATP-dependent pump, pulling dsDNA into and through the RuvAB complex. HJ branch migration allows RuvC to scan DNA until it finds its consensus sequence, where it cleaves and resolves the cruciform DNA. The chain is Holliday junction branch migration complex subunit RuvA from Bartonella bacilliformis (strain ATCC 35685 / KC583 / Herrer 020/F12,63).